Here is a 338-residue protein sequence, read N- to C-terminus: Popeye domain-containing protein 1 (338 aa).

Over 1 to 40 the chain is Extracellular; the sequence is MATESILITTLPMDLNSQINNVTFGLNENETLCENWREIH. 2 N-linked (GlcNAc...) asparagine glycosylation sites follow: Asn-21 and Asn-29. Residues 41–61 traverse the membrane as a helical segment; it reads HLVFHLANTCFAAGLVIPSTL. Residues 62–65 lie on the Cytoplasmic side of the membrane; it reads NLHM. The helical transmembrane segment at 66–86 threads the bilayer; it reads ILLRGMLCLGCIFFIIWAILF. Topologically, residues 87–91 are extracellular; sequence RCALD. A helical transmembrane segment spans residues 92 to 112; sequence IMIWNATFLSMNFMHFIYLVY. Topologically, residues 113–338 are cytoplasmic; that stretch reads KKRPIKIEKD…VGPLSHAVFC (226 aa).

The protein belongs to the popeye family.

The protein resides in the lateral cell membrane. The protein localises to the cell junction. It localises to the tight junction. Its subcellular location is the membrane. It is found in the cell membrane. The protein resides in the sarcolemma. The protein localises to the caveola. Functionally, cell adhesion molecule involved in the establishment and/or maintenance of cell integrity. May play a role in vamp3-mediated vesicular transport and recycling of different receptor molecules. May be involved in the formation and regulation of the tight junction (TJ) paracellular permeability barrier in epithelial cells. May induce primordial adhesive contact and aggregation of epithelial cells in a Ca(2+)-independent manner. May be involved in epithelial movement during corneal sheet formation and regeneration. May play a role in the regulation of cell shape and movement by modulating the Rho-GTPase activity. May be involved in skeletal muscle and heart development as well as in the maintenance of heart function. May also be involved in striated muscle regeneration and in the regulation of cell spreading. In Xenopus tropicalis (Western clawed frog), this protein is Popeye domain-containing protein 1 (popdc1).